Reading from the N-terminus, the 219-residue chain is GTP-binding protein Rit1 (219 aa).

GTP-binding positions include 28 to 35 (GAGGVGKS), 75 to 79 (DTAGQ), and 134 to 137 (NKSD).

Belongs to the small GTPase superfamily. Ras family. In terms of assembly, interacts with AFDN, the C-terminal domain of RALGDS and RLF, but not with RIN1 and PIK3CA. RLF binds exclusively to the active GTP-bound form. Strongly interacts with BRAF, but only weakly with RAF1. BARF and RAF1 association is dependent upon the GTP-bound state. Interacts with RGL3. As to expression, expressed in many tissues.

The protein resides in the cell membrane. The enzyme catalyses GTP + H2O = GDP + phosphate + H(+). Alternates between an inactive form bound to GDP and an active form bound to GTP. Its function is as follows. Plays a crucial role in coupling NGF stimulation to the activation of both EPHB2 and MAPK14 signaling pathways and in NGF-dependent neuronal differentiation. Involved in ELK1 transactivation through the Ras-MAPK signaling cascade that mediates a wide variety of cellular functions, including cell proliferation, survival, and differentiation. The polypeptide is GTP-binding protein Rit1 (Rit1) (Mus musculus (Mouse)).